Here is a 185-residue protein sequence, read N- to C-terminus: Ribosome-recycling factor (185 aa).

It belongs to the RRF family.

Its subcellular location is the cytoplasm. Functionally, responsible for the release of ribosomes from messenger RNA at the termination of protein biosynthesis. May increase the efficiency of translation by recycling ribosomes from one round of translation to another. In Brevibacillus brevis (strain 47 / JCM 6285 / NBRC 100599), this protein is Ribosome-recycling factor.